The chain runs to 267 residues: Diaminopimelate epimerase (267 aa).

Substrate-binding residues include Asn-15 and Asn-66. The active-site Proton donor is Cys-75. Substrate is bound by residues 76–77 (GN), Asn-150, Asn-183, and 201–202 (ER). The active-site Proton acceptor is Cys-210. 211–212 (GT) contributes to the substrate binding site.

The protein belongs to the diaminopimelate epimerase family. As to quaternary structure, homodimer.

Its subcellular location is the cytoplasm. It carries out the reaction (2S,6S)-2,6-diaminopimelate = meso-2,6-diaminopimelate. It functions in the pathway amino-acid biosynthesis; L-lysine biosynthesis via DAP pathway; DL-2,6-diaminopimelate from LL-2,6-diaminopimelate: step 1/1. Catalyzes the stereoinversion of LL-2,6-diaminopimelate (L,L-DAP) to meso-diaminopimelate (meso-DAP), a precursor of L-lysine and an essential component of the bacterial peptidoglycan. In Bacteroides thetaiotaomicron (strain ATCC 29148 / DSM 2079 / JCM 5827 / CCUG 10774 / NCTC 10582 / VPI-5482 / E50), this protein is Diaminopimelate epimerase.